Here is a 94-residue protein sequence, read N- to C-terminus: Co-chaperonin GroES (94 aa).

This sequence belongs to the GroES chaperonin family. As to quaternary structure, heptamer of 7 subunits arranged in a ring. Interacts with the chaperonin GroEL.

It is found in the cytoplasm. Together with the chaperonin GroEL, plays an essential role in assisting protein folding. The GroEL-GroES system forms a nano-cage that allows encapsulation of the non-native substrate proteins and provides a physical environment optimized to promote and accelerate protein folding. GroES binds to the apical surface of the GroEL ring, thereby capping the opening of the GroEL channel. This is Co-chaperonin GroES from Clostridium perfringens (strain ATCC 13124 / DSM 756 / JCM 1290 / NCIMB 6125 / NCTC 8237 / Type A).